Consider the following 31-residue polypeptide: Cytochrome b6-f complex subunit 6 (31 aa).

Residues 4–24 traverse the membrane as a helical segment; it reads VISYFGFLLVALAFTLVTYLG.

It belongs to the PetL family. The 4 large subunits of the cytochrome b6-f complex are cytochrome b6, subunit IV (17 kDa polypeptide, PetD), cytochrome f and the Rieske protein, while the 4 small subunits are PetG, PetL, PetM and PetN. The complex functions as a dimer.

The protein localises to the plastid. It is found in the chloroplast thylakoid membrane. Functionally, component of the cytochrome b6-f complex, which mediates electron transfer between photosystem II (PSII) and photosystem I (PSI), cyclic electron flow around PSI, and state transitions. PetL is important for photoautotrophic growth as well as for electron transfer efficiency and stability of the cytochrome b6-f complex. In Nephroselmis olivacea (Green alga), this protein is Cytochrome b6-f complex subunit 6.